We begin with the raw amino-acid sequence, 201 residues long: Probable GTP-binding protein EngB (201 aa).

Positions 21-191 (PEAQIALAGR…WQELARAAGV (171 aa)) constitute an EngB-type G domain. GTP-binding positions include 29–36 (GRSNVGKS), 56–60 (GKTRS), 75–78 (DLPG), 142–145 (TKAD), and 168–172 (VLTSS). Mg(2+)-binding residues include S36 and T58.

This sequence belongs to the TRAFAC class TrmE-Era-EngA-EngB-Septin-like GTPase superfamily. EngB GTPase family. Requires Mg(2+) as cofactor.

Necessary for normal cell division and for the maintenance of normal septation. This Desulfovibrio desulfuricans (strain ATCC 27774 / DSM 6949 / MB) protein is Probable GTP-binding protein EngB.